The chain runs to 131 residues: D-ribose pyranase (131 aa).

The active-site Proton donor is the histidine 20. Substrate-binding positions include aspartate 28, histidine 98, and 120 to 122 (YAN).

The protein belongs to the RbsD / FucU family. RbsD subfamily. As to quaternary structure, homodecamer.

It is found in the cytoplasm. The catalysed reaction is beta-D-ribopyranose = beta-D-ribofuranose. The protein operates within carbohydrate metabolism; D-ribose degradation; D-ribose 5-phosphate from beta-D-ribopyranose: step 1/2. In terms of biological role, catalyzes the interconversion of beta-pyran and beta-furan forms of D-ribose. The chain is D-ribose pyranase from Clostridium botulinum (strain Eklund 17B / Type B).